Consider the following 641-residue polypeptide: Macrolide export ATP-binding/permease protein MacB (641 aa).

The ABC transporter domain maps to 2 to 236 (IFLKNICKNI…LILKTMPKEK (235 aa)). An ATP-binding site is contributed by 34 to 41 (GQSGSGKT). 4 helical membrane passes run 265-285 (ILTM…VALG), 519-539 (ACVA…IMLV), 571-591 (MICT…IFAF), and 604-624 (AYSV…FGFF).

Belongs to the ABC transporter superfamily. Macrolide exporter (TC 3.A.1.122) family. Homodimer.

The protein localises to the cell inner membrane. Non-canonical ABC transporter that contains transmembrane domains (TMD), which form a pore in the inner membrane, and an ATP-binding domain (NBD), which is responsible for energy generation. Confers resistance against macrolides. This Campylobacter jejuni subsp. jejuni serotype O:2 (strain ATCC 700819 / NCTC 11168) protein is Macrolide export ATP-binding/permease protein MacB.